Here is a 586-residue protein sequence, read N- to C-terminus: Putative butyrophilin subfamily 2 member A3 (586 aa).

A signal peptide spans methionine 1–alanine 27. The Ig-like V-type domain maps to glutamine 28–valine 139. The Extracellular segment spans residues glutamine 28 to valine 246. N-linked (GlcNAc...) asparagine glycosylation is found at asparagine 45, asparagine 112, asparagine 214, and asparagine 220. Cysteine 50 and cysteine 123 form a disulfide bridge. The chain crosses the membrane as a helical span at residues valine 247–isoleucine 267. The Cytoplasmic segment spans residues asparagine 268–valine 586. A B30.2/SPRY domain is found at threonine 281–alanine 474.

It belongs to the immunoglobulin superfamily. BTN/MOG family.

Its subcellular location is the membrane. The polypeptide is Putative butyrophilin subfamily 2 member A3 (BTN2A3P) (Homo sapiens (Human)).